The sequence spans 1141 residues: Eukaryotic translation initiation factor 3 subunit A (1141 aa).

The region spanning Leu319–Thr501 is the PCI domain. Composition is skewed to basic and acidic residues over residues Gln588–Glu623 and Ala829–Asp899. 2 disordered regions span residues Gln588–Ile631 and Ala829–Arg1141. A Phosphoserine modification is found at Ser908. Basic and acidic residues-rich tracts occupy residues Glu920–Thr976, Ser990–Arg1051, Asp1059–Gln1087, and Thr1110–Asp1131.

This sequence belongs to the eIF-3 subunit A family. Component of the eukaryotic translation initiation factor 3 (eIF-3) complex. The eIF-3 complex interacts with pix.

It is found in the cytoplasm. In terms of biological role, RNA-binding component of the eukaryotic translation initiation factor 3 (eIF-3) complex, which is involved in protein synthesis of a specialized repertoire of mRNAs and, together with other initiation factors, stimulates binding of mRNA and methionyl-tRNAi to the 40S ribosome. The eIF-3 complex specifically targets and initiates translation of a subset of mRNAs involved in cell proliferation. In Drosophila simulans (Fruit fly), this protein is Eukaryotic translation initiation factor 3 subunit A.